A 495-amino-acid chain; its full sequence is UDP-N-acetylmuramoyl-L-alanyl-D-glutamate--2,6-diaminopimelate ligase (495 aa).

2 residues coordinate UDP-N-acetyl-alpha-D-muramoyl-L-alanyl-D-glutamate: leucine 32 and serine 34. 119–125 contributes to the ATP binding site; sequence GTNGKTT. UDP-N-acetyl-alpha-D-muramoyl-L-alanyl-D-glutamate-binding positions include asparagine 160, 161–162, serine 188, glutamine 194, and arginine 196; that span reads TT. Residue lysine 228 is modified to N6-carboxylysine. Residues arginine 390, 414–417, glycine 465, and glutamate 469 each bind meso-2,6-diaminopimelate; that span reads DNPR. A Meso-diaminopimelate recognition motif motif is present at residues 414–417; sequence DNPR.

Belongs to the MurCDEF family. MurE subfamily. It depends on Mg(2+) as a cofactor. In terms of processing, carboxylation is probably crucial for Mg(2+) binding and, consequently, for the gamma-phosphate positioning of ATP.

The protein localises to the cytoplasm. The enzyme catalyses UDP-N-acetyl-alpha-D-muramoyl-L-alanyl-D-glutamate + meso-2,6-diaminopimelate + ATP = UDP-N-acetyl-alpha-D-muramoyl-L-alanyl-gamma-D-glutamyl-meso-2,6-diaminopimelate + ADP + phosphate + H(+). It functions in the pathway cell wall biogenesis; peptidoglycan biosynthesis. In terms of biological role, catalyzes the addition of meso-diaminopimelic acid to the nucleotide precursor UDP-N-acetylmuramoyl-L-alanyl-D-glutamate (UMAG) in the biosynthesis of bacterial cell-wall peptidoglycan. In Vibrio cholerae serotype O1 (strain ATCC 39315 / El Tor Inaba N16961), this protein is UDP-N-acetylmuramoyl-L-alanyl-D-glutamate--2,6-diaminopimelate ligase.